Here is a 296-residue protein sequence, read N- to C-terminus: Tuberculosinyl adenosine transferase (296 aa).

It belongs to the diterpene synthase family. In terms of assembly, homodimer. Mg(2+) serves as cofactor.

It catalyses the reaction tuberculosinyl diphosphate + adenosine + H(+) = 1-tuberculosinyladenosine + diphosphate. The catalysed reaction is tuberculosinyl diphosphate + H2O = tuberculosinol + diphosphate. The enzyme catalyses tuberculosinyl diphosphate + H2O = (13R)-edaxadiene + diphosphate. It carries out the reaction tuberculosinyl diphosphate + H2O = (13S)-edaxadiene + diphosphate. Functionally, tuberculosinyl transferase that catalyzes the condensation of adenosine and tuberculosinyl diphosphate (TbPP) to generate 1-tuberculosinyladenosine (1-TbAd), which acts as an antiacid that directly protects M.tuberculosis from acid pH and physically remodels M.tuberculosis phagolysosomes. In addition, acts as a phosphatase that catalyzes the diphosphate-removal from TbPP to produce both tuberculosinol (TOH) and isotuberculosinol (iso-TOH). In Mycobacterium tuberculosis (strain CDC 1551 / Oshkosh), this protein is Tuberculosinyl adenosine transferase.